The following is a 397-amino-acid chain: 4-hydroxybenzoate polyprenyltransferase, mitochondrial (397 aa).

A mitochondrion-targeting transit peptide spans 1 to 14; the sequence is MFAVRHLLKSRKHF. Helical transmembrane passes span 96 to 116, 121 to 141, 169 to 189, 190 to 210, 213 to 233, 242 to 262, 289 to 309, 313 to 333, and 345 to 365; these read IGTY…ADAG, LTML…GCTI, FDAI…LVQL, NWQS…YPLM, VTYW…LLGW, LAAC…YDTI, VWLS…GWAC, LPYY…IYSL, and FLSN…GTLL.

The protein belongs to the UbiA prenyltransferase family. It depends on Mg(2+) as a cofactor.

It localises to the mitochondrion inner membrane. The enzyme catalyses an all-trans-polyprenyl diphosphate + 4-hydroxybenzoate = a 4-hydroxy-3-(all-trans-polyprenyl)benzoate + diphosphate. The protein operates within cofactor biosynthesis; ubiquinone biosynthesis. Its function is as follows. Catalyzes the prenylation of para-hydroxybenzoate (PHB) with an all-trans polyprenyl group. Mediates the second step in the final reaction sequence of coenzyme Q (CoQ) biosynthesis, which is the condensation of the polyisoprenoid side chain with PHB, generating the first membrane-bound Q intermediate. The sequence is that of 4-hydroxybenzoate polyprenyltransferase, mitochondrial from Drosophila pseudoobscura pseudoobscura (Fruit fly).